Consider the following 317-residue polypeptide: Thiamine thiazole synthase (317 aa).

Substrate contacts are provided by residues C78, 99 to 100 (EA), G107, and V172. C206 carries the 2,3-didehydroalanine (Cys) modification. Substrate contacts are provided by residues D208, H223, M275, and 285 to 287 (RMG).

It belongs to the THI4 family. In terms of assembly, homooctamer. The cofactor is Fe cation. During the catalytic reaction, a sulfide is transferred from Cys-206 to a reaction intermediate, generating a dehydroalanine residue.

The protein resides in the cytoplasm. It localises to the nucleus. The enzyme catalyses [ADP-thiazole synthase]-L-cysteine + glycine + NAD(+) = [ADP-thiazole synthase]-dehydroalanine + ADP-5-ethyl-4-methylthiazole-2-carboxylate + nicotinamide + 3 H2O + 2 H(+). Its function is as follows. Involved in biosynthesis of the thiamine precursor thiazole. Catalyzes the conversion of NAD and glycine to adenosine diphosphate 5-(2-hydroxyethyl)-4-methylthiazole-2-carboxylic acid (ADT), an adenylated thiazole intermediate. The reaction includes an iron-dependent sulfide transfer from a conserved cysteine residue of the protein to a thiazole intermediate. The enzyme can only undergo a single turnover, which suggests it is a suicide enzyme. May have additional roles in adaptation to various stress conditions and in DNA damage tolerance. This chain is Thiamine thiazole synthase, found in Yarrowia lipolytica (strain CLIB 122 / E 150) (Yeast).